Consider the following 132-residue polypeptide: Gonadotropin subunit beta-1 (132 aa).

Positions 1–17 (MMRGVTMVLLLPMLVWA) are cleaved as a signal peptide. Cystine bridges form between Cys-25/Cys-73, Cys-39/Cys-88, Cys-50/Cys-104, Cys-54/Cys-106, and Cys-109/Cys-116. N-linked (GlcNAc...) asparagine glycosylation is found at Asn-29 and Asn-46.

Belongs to the glycoprotein hormones subunit beta family. In terms of assembly, heterodimer of an alpha and a beta chain.

The protein localises to the secreted. In terms of biological role, involved in gametogenesis and steroidogenesis. The protein is Gonadotropin subunit beta-1 (cgba) of Ictalurus punctatus (Channel catfish).